The chain runs to 218 residues: N-(5'-phosphoribosyl)anthranilate isomerase (218 aa).

It belongs to the TrpF family.

The catalysed reaction is N-(5-phospho-beta-D-ribosyl)anthranilate = 1-(2-carboxyphenylamino)-1-deoxy-D-ribulose 5-phosphate. It functions in the pathway amino-acid biosynthesis; L-tryptophan biosynthesis; L-tryptophan from chorismate: step 3/5. This is N-(5'-phosphoribosyl)anthranilate isomerase from Halobacterium salinarum (strain ATCC 29341 / DSM 671 / R1).